Consider the following 230-residue polypeptide: Large ribosomal subunit protein uL1 (230 aa).

It belongs to the universal ribosomal protein uL1 family. As to quaternary structure, part of the 50S ribosomal subunit.

Functionally, binds directly to 23S rRNA. The L1 stalk is quite mobile in the ribosome, and is involved in E site tRNA release. Its function is as follows. Protein L1 is also a translational repressor protein, it controls the translation of the L11 operon by binding to its mRNA. This Chromohalobacter salexigens (strain ATCC BAA-138 / DSM 3043 / CIP 106854 / NCIMB 13768 / 1H11) protein is Large ribosomal subunit protein uL1.